The primary structure comprises 273 residues: uncharacterized protein (273 aa).

A signal peptide spans 1 to 21 (MKILRWLFALVMLIATTEAMA).

To S.typhimurium YadU.

Functionally, part of the yfcOPQRSUV fimbrial operon. Could contribute to adhesion to various surfaces in specific environmental niches. Increases adhesion to eukaryotic T24 bladder epithelial cells in the absence of fim genes. This is an uncharacterized protein from Escherichia coli (strain K12).